Here is a 224-residue protein sequence, read N- to C-terminus: Cytosolic-abundant heat soluble protein 77580 (224 aa).

Low complexity predominate over residues 1 to 13 (MSNYQQESSYQYS). The tract at residues 1-38 (MSNYQQESSYQYSDRSNNGQQQEQQEKKEVEHSSYTHT) is disordered. Residues 24-38 (QQEKKEVEHSSYTHT) show a composition bias toward basic and acidic residues. Residues 83–191 (VIDTEAETEE…KRVLERSKFH (109 aa)) adopt a coiled-coil conformation. 2 CAHS motif regions span residues 122–140 (YRKQ…LEKQ) and 159–177 (QKRQ…LERE). Positions 200 to 215 (AAAGSTHSGSSSVAVS) are enriched in low complexity. The interval 200–224 (AAAGSTHSGSSSVAVSESEKFQTNN) is disordered.

It belongs to the Cytosolic-abundant heat soluble protein (CAHS) family.

The protein resides in the cytoplasm. CAHS proteins are cytosolic heat soluble proteins that seem to contribute to the anhydrobiosis in tardigrades, but their specific mechanisms are yet to be identified. It is possible that protection during anhydrobiosis might occur via the stabilization of vitrifying small molecules such as sugars, but not via the direct glass transition of CAHS proteins themselves. This Hypsibius exemplaris (Freshwater tardigrade) protein is Cytosolic-abundant heat soluble protein 77580.